The primary structure comprises 64 residues: Small ribosomal subunit protein bS21 (64 aa).

It belongs to the bacterial ribosomal protein bS21 family.

In Neorickettsia sennetsu (strain ATCC VR-367 / Miyayama) (Ehrlichia sennetsu), this protein is Small ribosomal subunit protein bS21.